A 595-amino-acid chain; its full sequence is Inactive glycosyltransferase 25 family member 3 (595 aa).

The N-terminal stretch at 1–22 (MRAARAAPLLQLLLLLGPWLEA) is a signal peptide. 4 N-linked (GlcNAc...) asparagine glycosylation sites follow: Asn75, Asn153, Asn237, and Asn360. The disordered stretch occupies residues 548 to 595 (DTETSSPWDDDSGRLISWSGSQKTLRSPRLDLTGSSGHSLQPQPRDEL). Positions 580–589 (TGSSGHSLQP) are enriched in polar residues. The Prevents secretion from ER motif lies at 592–595 (RDEL).

It belongs to the glycosyltransferase 25 family. As to expression, ubiquitous. Highly expressed in secretory and nervous tissues.

The protein localises to the endoplasmic reticulum lumen. Its function is as follows. Probable cell adhesion protein involved in leukocyte transmigration across the blood-brain barrier. Does not express any beta-galactosyltransferase activity in vitro. The polypeptide is Inactive glycosyltransferase 25 family member 3 (CERCAM) (Homo sapiens (Human)).